The primary structure comprises 395 residues: MRLIMMKVSAYDLNKIAEKLNLSIKDLNKAFSRKILREDEYKEIKTLLFKKEFKGIEKGTVIFLNDNLDVVRGYPKTYRAITLYPTIKKHFIDKVVIEEKLNGYNIRIVKIDGEVYALTRSGYICPFTTKKVKKFLNLEILDDYSEYMLCGEMIGINNPYTPYYYKEVDRGFENLGFYIFDIKERETNKSLPIKERINLCEKYNLPYVKPLAVVDKDEAHIHVREIIEKLNKEGREGVVLKDPDMAVSPIKYTTHYTQCEDLKSAFTFFFDLGMDFLFSRVVREGFMSYEFKETLEERKNRAKDLGEAILLPMVETINKVASGERVSEDFELIFDSEEDFDEFLDFMRKMKMVITIKNIEKIDTEEGVKIKAVIGKIYNKTNDKIISYLNGTLWE.

This is an uncharacterized protein from Methanocaldococcus jannaschii (strain ATCC 43067 / DSM 2661 / JAL-1 / JCM 10045 / NBRC 100440) (Methanococcus jannaschii).